A 156-amino-acid chain; its full sequence is Arginine repressor (156 aa).

The protein belongs to the ArgR family.

The protein resides in the cytoplasm. It functions in the pathway amino-acid biosynthesis; L-arginine biosynthesis [regulation]. Functionally, regulates arginine biosynthesis genes. The protein is Arginine repressor of Vibrio cholerae serotype O1 (strain ATCC 39315 / El Tor Inaba N16961).